The chain runs to 60 residues: uncharacterized protein (60 aa).

This is an uncharacterized protein from Thermotoga maritima (strain ATCC 43589 / DSM 3109 / JCM 10099 / NBRC 100826 / MSB8).